We begin with the raw amino-acid sequence, 701 residues long: Polyribonucleotide nucleotidyltransferase (701 aa).

The Mg(2+) site is built by D487 and D493. Residues 554–613 form the KH domain; it reads PTMIAMKIDTDKIRDVIGKGGATIRAICEETKASIDIEDDGSIKIFGETKEAADAAKQRI. The 69-residue stretch at 623-691 folds into the S1 motif domain; sequence GKIYVGKVER…NRGRIKLSIK (69 aa).

This sequence belongs to the polyribonucleotide nucleotidyltransferase family. As to quaternary structure, component of the RNA degradosome, which is a multiprotein complex involved in RNA processing and mRNA degradation. It depends on Mg(2+) as a cofactor.

It localises to the cytoplasm. It carries out the reaction RNA(n+1) + phosphate = RNA(n) + a ribonucleoside 5'-diphosphate. Functionally, involved in mRNA degradation. Catalyzes the phosphorolysis of single-stranded polyribonucleotides processively in the 3'- to 5'-direction. The protein is Polyribonucleotide nucleotidyltransferase of Pseudomonas putida (strain ATCC 47054 / DSM 6125 / CFBP 8728 / NCIMB 11950 / KT2440).